The primary structure comprises 274 residues: tRNA (cytosine(48)-C(5))-methyltransferase (274 aa).

Residues 91-97 (CAAPGGK), glutamate 115, arginine 120, aspartate 142, aspartate 163, asparagine 169, and arginine 189 contribute to the S-adenosyl-L-methionine site. The active-site Nucleophile is the cysteine 212.

It belongs to the class I-like SAM-binding methyltransferase superfamily. RsmB/NOP family.

Its subcellular location is the cytoplasm. It carries out the reaction cytidine(48) in tRNA precursor + S-adenosyl-L-methionine = 5-methylcytidine(48) in tRNA precursor + S-adenosyl-L-homocysteine + H(+). It catalyses the reaction cytidine(40) in tRNA precursor + S-adenosyl-L-methionine = 5-methylcytidine(40) in tRNA precursor + S-adenosyl-L-homocysteine + H(+). Catalyzes AdoMet-dependent formation of m5C in tRNA. Cytidine residue at either position 40 or position 48 is likely to be methylated. This Methanocaldococcus jannaschii (strain ATCC 43067 / DSM 2661 / JAL-1 / JCM 10045 / NBRC 100440) (Methanococcus jannaschii) protein is tRNA (cytosine(48)-C(5))-methyltransferase (trm4).